We begin with the raw amino-acid sequence, 497 residues long: Vacuolar-processing enzyme beta-isozyme 1 (497 aa).

The first 23 residues, 1 to 23 (MAARCWVWGFVVALLAVAAAADG), serve as a signal peptide directing secretion. A glycan (N-linked (GlcNAc...) asparagine) is linked at N153. The active site involves H180. C222 acts as the Nucleophile in catalysis. The cysteines at positions 255 and 269 are disulfide-linked. N340 carries N-linked (GlcNAc...) asparagine glycosylation. Intrachain disulfides connect C432–C462 and C444–C479.

This sequence belongs to the peptidase C13 family. Auto-catalytic activation. As to expression, expressed in developing seeds.

It is found in the protein storage vacuole. It catalyses the reaction Hydrolysis of proteins and small molecule substrates at -Asn-|-Xaa- bonds.. In terms of biological role, asparagine-specific endopeptidase that may be involved in processing of proteins targeted to vacuoles. Cysteine protease required for post-translational proteolysis of seed storage proteins in the protein storage vacuole (PSV) of developing seeds, by processing of proglutelin precursor to mature glutelin subunits, thus contributing to the formation of protein crystalline structures in PSV. In Oryza sativa subsp. japonica (Rice), this protein is Vacuolar-processing enzyme beta-isozyme 1.